The primary structure comprises 141 residues: Large ribosomal subunit protein uL11 (141 aa).

This sequence belongs to the universal ribosomal protein uL11 family. As to quaternary structure, part of the ribosomal stalk of the 50S ribosomal subunit. Interacts with L10 and the large rRNA to form the base of the stalk. L10 forms an elongated spine to which L12 dimers bind in a sequential fashion forming a multimeric L10(L12)X complex. In terms of processing, one or more lysine residues are methylated.

Forms part of the ribosomal stalk which helps the ribosome interact with GTP-bound translation factors. In Geobacillus sp. (strain WCH70), this protein is Large ribosomal subunit protein uL11.